Reading from the N-terminus, the 435-residue chain is Adenylosuccinate synthetase (435 aa).

Residues 22-28 and 50-52 each bind GTP; these read GDEGKGK and GHT. Aspartate 23 functions as the Proton acceptor in the catalytic mechanism. Residues aspartate 23 and glycine 50 each contribute to the Mg(2+) site. IMP is bound by residues 23-26, 48-51, threonine 140, arginine 154, glutamine 235, threonine 250, and arginine 314; these read DEGK and NAGH. Histidine 51 serves as the catalytic Proton donor. Substrate is bound at residue 310 to 316; the sequence is ATTGRKR. GTP-binding positions include arginine 316, 342 to 344, and 424 to 426; these read KLD and SVG.

It belongs to the adenylosuccinate synthetase family. In terms of assembly, homodimer. Mg(2+) serves as cofactor.

It localises to the cytoplasm. The catalysed reaction is IMP + L-aspartate + GTP = N(6)-(1,2-dicarboxyethyl)-AMP + GDP + phosphate + 2 H(+). It participates in purine metabolism; AMP biosynthesis via de novo pathway; AMP from IMP: step 1/2. Functionally, plays an important role in the de novo pathway of purine nucleotide biosynthesis. Catalyzes the first committed step in the biosynthesis of AMP from IMP. The chain is Adenylosuccinate synthetase from Chlorobaculum parvum (strain DSM 263 / NCIMB 8327) (Chlorobium vibrioforme subsp. thiosulfatophilum).